The following is a 256-amino-acid chain: Ribosomal RNA small subunit methyltransferase A (256 aa).

The S-adenosyl-L-methionine site is built by N12, L14, G39, E60, D85, and N103.

The protein belongs to the class I-like SAM-binding methyltransferase superfamily. rRNA adenine N(6)-methyltransferase family. RsmA subfamily.

It localises to the cytoplasm. The enzyme catalyses adenosine(1518)/adenosine(1519) in 16S rRNA + 4 S-adenosyl-L-methionine = N(6)-dimethyladenosine(1518)/N(6)-dimethyladenosine(1519) in 16S rRNA + 4 S-adenosyl-L-homocysteine + 4 H(+). In terms of biological role, specifically dimethylates two adjacent adenosines (A1518 and A1519) in the loop of a conserved hairpin near the 3'-end of 16S rRNA in the 30S particle. May play a critical role in biogenesis of 30S subunits. The chain is Ribosomal RNA small subunit methyltransferase A from Legionella pneumophila (strain Lens).